Here is a 353-residue protein sequence, read N- to C-terminus: Photosystem II protein D1 (353 aa).

Thr-2 carries the N-acetylthreonine modification. Thr-2 is subject to Phosphothreonine. Helical transmembrane passes span 29–46, 118–133, and 142–156; these read YIGWFGVLMIPTLLTATS, HFLLGVACYMGREWEL, and WIAVAYSAPVAAATA. His-118 provides a ligand contact to chlorophyll a. Pheophytin a is bound at residue Tyr-126. [CaMn4O5] cluster contacts are provided by Asp-170 and Glu-189. The helical transmembrane segment at 197 to 218 threads the bilayer; that stretch reads FHMLGVAGVFGGSLFSAMHGSL. His-198 provides a ligand contact to chlorophyll a. Residues His-215 and 264–265 each bind a quinone; that span reads SF. Position 215 (His-215) interacts with Fe cation. Residue His-272 coordinates Fe cation. Residues 274–288 traverse the membrane as a helical segment; it reads FLAAWPVVGIWFTAL. The [CaMn4O5] cluster site is built by His-332, Glu-333, Asp-342, and Ala-344. Positions 345-353 are excised as a propeptide; sequence AVEVPSTNG.

Belongs to the reaction center PufL/M/PsbA/D family. In terms of assembly, PSII is composed of 1 copy each of membrane proteins PsbA, PsbB, PsbC, PsbD, PsbE, PsbF, PsbH, PsbI, PsbJ, PsbK, PsbL, PsbM, PsbT, PsbX, PsbY, PsbZ, Psb30/Ycf12, at least 3 peripheral proteins of the oxygen-evolving complex and a large number of cofactors. It forms dimeric complexes. The cofactor is The D1/D2 heterodimer binds P680, chlorophylls that are the primary electron donor of PSII, and subsequent electron acceptors. It shares a non-heme iron and each subunit binds pheophytin, quinone, additional chlorophylls, carotenoids and lipids. D1 provides most of the ligands for the Mn4-Ca-O5 cluster of the oxygen-evolving complex (OEC). There is also a Cl(-1) ion associated with D1 and D2, which is required for oxygen evolution. The PSII complex binds additional chlorophylls, carotenoids and specific lipids.. In terms of processing, tyr-161 forms a radical intermediate that is referred to as redox-active TyrZ, YZ or Y-Z. C-terminally processed by CTPA; processing is essential to allow assembly of the oxygen-evolving complex and thus photosynthetic growth.

Its subcellular location is the plastid. It is found in the chloroplast thylakoid membrane. The enzyme catalyses 2 a plastoquinone + 4 hnu + 2 H2O = 2 a plastoquinol + O2. Its function is as follows. Photosystem II (PSII) is a light-driven water:plastoquinone oxidoreductase that uses light energy to abstract electrons from H(2)O, generating O(2) and a proton gradient subsequently used for ATP formation. It consists of a core antenna complex that captures photons, and an electron transfer chain that converts photonic excitation into a charge separation. The D1/D2 (PsbA/PsbD) reaction center heterodimer binds P680, the primary electron donor of PSII as well as several subsequent electron acceptors. This chain is Photosystem II protein D1, found in Eucalyptus globulus subsp. globulus (Tasmanian blue gum).